Consider the following 484-residue polypeptide: Aldehyde dehydrogenase family 3 member H1 (484 aa).

NAD(+) is bound at residue 196-201 (GSSKIG). The active-site Proton acceptor is the Glu-218. Cys-253 serves as the catalytic Nucleophile.

The protein belongs to the aldehyde dehydrogenase family. In terms of assembly, homodimer and homomultimer. In terms of tissue distribution, isoform alpha is expressed in expanded leaves and flowers. Detected in seedlings. Isoform beta is mainly expressed in flowers. Detected in leaves and seedlings.

It carries out the reaction an aldehyde + NAD(+) + H2O = a carboxylate + NADH + 2 H(+). With respect to regulation, thiol-based regulation. Inactivation after dimerization under oxidizing conditions. Involved in oxidative stress tolerance by detoxifying reactive aldehydes derived from lipid peroxidation. Medium- to long-chain saturated aldehydes are preferred substrates, while the short-chain aldehyde propanal is a weak substrate. Is strictely NAD(+) specific. The polypeptide is Aldehyde dehydrogenase family 3 member H1 (ALDH3H1) (Arabidopsis thaliana (Mouse-ear cress)).